The primary structure comprises 146 residues: D-aminoacyl-tRNA deacylase (146 aa).

The short motif at 137–138 is the Gly-cisPro motif, important for rejection of L-amino acids element; the sequence is GP.

It belongs to the DTD family. As to quaternary structure, homodimer.

It is found in the cytoplasm. It catalyses the reaction glycyl-tRNA(Ala) + H2O = tRNA(Ala) + glycine + H(+). It carries out the reaction a D-aminoacyl-tRNA + H2O = a tRNA + a D-alpha-amino acid + H(+). In terms of biological role, an aminoacyl-tRNA editing enzyme that deacylates mischarged D-aminoacyl-tRNAs. Also deacylates mischarged glycyl-tRNA(Ala), protecting cells against glycine mischarging by AlaRS. Acts via tRNA-based rather than protein-based catalysis; rejects L-amino acids rather than detecting D-amino acids in the active site. By recycling D-aminoacyl-tRNA to D-amino acids and free tRNA molecules, this enzyme counteracts the toxicity associated with the formation of D-aminoacyl-tRNA entities in vivo and helps enforce protein L-homochirality. In Thermodesulfovibrio yellowstonii (strain ATCC 51303 / DSM 11347 / YP87), this protein is D-aminoacyl-tRNA deacylase.